The sequence spans 273 residues: BTB and MATH domain-containing protein 15 (273 aa).

Residues glutamate 7–valine 123 enclose the MATH domain. The region spanning serine 147–tyrosine 206 is the BTB domain.

In terms of assembly, interacts with cul-3.

It functions in the pathway protein modification; protein ubiquitination. Functionally, probable substrate-specific adapter of an E3 ubiquitin-protein ligase complex which mediates the ubiquitination and subsequent proteasomal degradation of target proteins. This chain is BTB and MATH domain-containing protein 15 (bath-15), found in Caenorhabditis elegans.